The sequence spans 155 residues: Ribosomal RNA large subunit methyltransferase H (155 aa).

S-adenosyl-L-methionine contacts are provided by residues Leu72, Gly103, and 122-127; that span reads LSPLTL.

This sequence belongs to the RNA methyltransferase RlmH family. In terms of assembly, homodimer.

It is found in the cytoplasm. It carries out the reaction pseudouridine(1915) in 23S rRNA + S-adenosyl-L-methionine = N(3)-methylpseudouridine(1915) in 23S rRNA + S-adenosyl-L-homocysteine + H(+). Specifically methylates the pseudouridine at position 1915 (m3Psi1915) in 23S rRNA. The chain is Ribosomal RNA large subunit methyltransferase H from Haemophilus influenzae (strain PittEE).